The primary structure comprises 873 residues: Probable inorganic carbon transporter subunit DabA (873 aa).

Residues Cys393, Asp395, His575, and Cys590 each coordinate Zn(2+).

Belongs to the inorganic carbon transporter (TC 9.A.2) DabA family. In terms of assembly, forms a complex with DabB. It depends on Zn(2+) as a cofactor.

The protein resides in the cell membrane. Functionally, part of an energy-coupled inorganic carbon pump. The protein is Probable inorganic carbon transporter subunit DabA of Bacillus licheniformis (strain ATCC 14580 / DSM 13 / JCM 2505 / CCUG 7422 / NBRC 12200 / NCIMB 9375 / NCTC 10341 / NRRL NRS-1264 / Gibson 46).